A 98-amino-acid polypeptide reads, in one-letter code: Small ribosomal subunit protein uS19 (98 aa).

Residues 77–98 (TRTYRGHAGGKSEKGGSAPRKK) are disordered.

This sequence belongs to the universal ribosomal protein uS19 family.

Protein S19 forms a complex with S13 that binds strongly to the 16S ribosomal RNA. This chain is Small ribosomal subunit protein uS19, found in Chlorobium phaeobacteroides (strain BS1).